A 507-amino-acid chain; its full sequence is Maturase K (507 aa).

The protein belongs to the intron maturase 2 family. MatK subfamily.

The protein resides in the plastid. It localises to the chloroplast. Usually encoded in the trnK tRNA gene intron. Probably assists in splicing its own and other chloroplast group II introns. The polypeptide is Maturase K (Umbellularia californica (California bay laurel)).